Reading from the N-terminus, the 104-residue chain is Large ribosomal subunit protein bL21 (104 aa).

Belongs to the bacterial ribosomal protein bL21 family. As to quaternary structure, part of the 50S ribosomal subunit. Contacts protein L20.

In terms of biological role, this protein binds to 23S rRNA in the presence of protein L20. The chain is Large ribosomal subunit protein bL21 from Alkalilimnicola ehrlichii (strain ATCC BAA-1101 / DSM 17681 / MLHE-1).